The sequence spans 398 residues: Deoxyguanosinetriphosphate triphosphohydrolase-like protein (398 aa).

The HD domain maps to 68 to 215 (RLTHTLEVAQ…AAISDDIAYD (148 aa)).

It belongs to the dGTPase family. Type 2 subfamily.

In Azorhizobium caulinodans (strain ATCC 43989 / DSM 5975 / JCM 20966 / LMG 6465 / NBRC 14845 / NCIMB 13405 / ORS 571), this protein is Deoxyguanosinetriphosphate triphosphohydrolase-like protein.